The following is a 238-amino-acid chain: 2-C-methyl-D-erythritol 4-phosphate cytidylyltransferase (238 aa).

It belongs to the IspD/TarI cytidylyltransferase family. IspD subfamily.

It catalyses the reaction 2-C-methyl-D-erythritol 4-phosphate + CTP + H(+) = 4-CDP-2-C-methyl-D-erythritol + diphosphate. Its pathway is isoprenoid biosynthesis; isopentenyl diphosphate biosynthesis via DXP pathway; isopentenyl diphosphate from 1-deoxy-D-xylulose 5-phosphate: step 2/6. Catalyzes the formation of 4-diphosphocytidyl-2-C-methyl-D-erythritol from CTP and 2-C-methyl-D-erythritol 4-phosphate (MEP). The polypeptide is 2-C-methyl-D-erythritol 4-phosphate cytidylyltransferase (Paraburkholderia phytofirmans (strain DSM 17436 / LMG 22146 / PsJN) (Burkholderia phytofirmans)).